Here is a 234-residue protein sequence, read N- to C-terminus: Ribulose-phosphate 3-epimerase (234 aa).

Ser7 contributes to the substrate binding site. His32, Asp34, and His65 together coordinate a divalent metal cation. Asp34 (proton acceptor) is an active-site residue. Residues His65, Gly139 to Gly142, Asp172 to Gly174, and Ala194 to Ser195 contribute to the substrate site. Residue Asp172 participates in a divalent metal cation binding. Asp172 (proton donor) is an active-site residue.

Belongs to the ribulose-phosphate 3-epimerase family. It depends on a divalent metal cation as a cofactor.

The catalysed reaction is D-ribulose 5-phosphate = D-xylulose 5-phosphate. Its pathway is carbohydrate degradation. Functionally, catalyzes the reversible epimerization of D-ribulose 5-phosphate to D-xylulose 5-phosphate. This is Ribulose-phosphate 3-epimerase from Methanocaldococcus jannaschii (strain ATCC 43067 / DSM 2661 / JAL-1 / JCM 10045 / NBRC 100440) (Methanococcus jannaschii).